An 84-amino-acid polypeptide reads, in one-letter code: Control protein C.SmaI (84 aa).

Residues 19–73 (VRSYRNINNLSQEQLAEISGLHRTYIGSVERKERNVTLSTLIILAKALNTSVPKL) enclose the HTH cro/C1-type domain. A DNA-binding region (H-T-H motif) is located at residues 30–49 (QEQLAEISGLHRTYIGSVER).

In terms of biological role, may control expression of its associated restriction-modification system SmaI. The polypeptide is Control protein C.SmaI (Serratia marcescens).